Here is a 594-residue protein sequence, read N- to C-terminus: Grainyhead-like protein 3 homolog (594 aa).

2 transcription activation regions span residues 25-75 (NDDE…RIIT) and 28-91 (EAWS…SCIE). The 234-residue stretch at 220–453 (ANRDFECTLE…DMETHPVLFI (234 aa)) folds into the Grh/CP2 DB domain. Residues 483 to 503 (SSQSFPESFEAPPSKQQTNED) form a disordered region.

This sequence belongs to the grh/CP2 family. Grainyhead subfamily.

It localises to the nucleus. Its function is as follows. Transcription factor playing important roles in primary neurulation and in the differentiation of stratified epithelia of both ectodermal and endodermal origin. Binds directly to the consensus DNA sequence 5'-AACCGGTT-3' acting as an activator and repressor on distinct target genes. The protein is Grainyhead-like protein 3 homolog (grhl3) of Xenopus tropicalis (Western clawed frog).